A 397-amino-acid polypeptide reads, in one-letter code: Argininosuccinate synthase (397 aa).

Residue 9–17 participates in ATP binding; it reads AYSGGLDTS. Residue tyrosine 87 participates in L-citrulline binding. Glycine 117 lines the ATP pocket. The L-aspartate site is built by threonine 119, asparagine 123, and aspartate 124. Asparagine 123 lines the L-citrulline pocket. The L-citrulline site is built by arginine 127, serine 175, serine 184, glutamate 257, and tyrosine 269.

It belongs to the argininosuccinate synthase family. Type 1 subfamily. As to quaternary structure, homotetramer.

It is found in the cytoplasm. It carries out the reaction L-citrulline + L-aspartate + ATP = 2-(N(omega)-L-arginino)succinate + AMP + diphosphate + H(+). The protein operates within amino-acid biosynthesis; L-arginine biosynthesis; L-arginine from L-ornithine and carbamoyl phosphate: step 2/3. This Dictyoglomus turgidum (strain DSM 6724 / Z-1310) protein is Argininosuccinate synthase.